The sequence spans 1002 residues: Hypoxia up-regulated protein 1 (1002 aa).

The first 23 residues, 1-23 (MARAPRWMLGWLLLACCVPHTEP), serve as a signal peptide directing secretion. Disordered regions lie at residues 576-698 (LFGG…PKKQ) and 918-1002 (KPKP…NDEL). The segment covering 643–675 (PPKEESQKNEEGEKSEARDPKEDKETVNEEELS) has biased composition (basic and acidic residues). Over residues 933 to 947 (GKNATGTSESENTIP) the composition is skewed to polar residues. Basic and acidic residues-rich tracts occupy residues 951 to 962 (GKQEEKPEDISP) and 983 to 1002 (SSKK…NDEL). The Prevents secretion from ER signature appears at 999–1002 (NDEL).

It belongs to the heat shock protein 70 family.

The protein resides in the endoplasmic reticulum lumen. Has a pivotal role in cytoprotective cellular mechanisms triggered by oxygen deprivation. Promotes HSPA5/BiP-mediated ATP nucleotide exchange and thereby activates the unfolded protein response (UPR) pathway in the presence of endoplasmic reticulum stress. May play a role as a molecular chaperone and participate in protein folding. This Gallus gallus (Chicken) protein is Hypoxia up-regulated protein 1 (HYOU1).